Consider the following 380-residue polypeptide: Chaperone protein DnaJ (380 aa).

In terms of domain architecture, J spans 6 to 71; the sequence is DYYESLEVSR…QKRAAYDRYG (66 aa). The CR-type zinc finger occupies 136–215; the sequence is GVTKDVEVRT…CHGTGTEAKT (80 aa). 8 residues coordinate Zn(2+): C149, C152, C167, C170, C189, C192, C203, and C206. CXXCXGXG motif repeat units lie at residues 149–156, 167–174, 189–196, and 203–210; these read CEACHGSG, CPTCHGAG, CPTCHGSG, and CKVCHGTG.

It belongs to the DnaJ family. As to quaternary structure, homodimer. It depends on Zn(2+) as a cofactor.

It is found in the cytoplasm. In terms of biological role, participates actively in the response to hyperosmotic and heat shock by preventing the aggregation of stress-denatured proteins and by disaggregating proteins, also in an autonomous, DnaK-independent fashion. Unfolded proteins bind initially to DnaJ; upon interaction with the DnaJ-bound protein, DnaK hydrolyzes its bound ATP, resulting in the formation of a stable complex. GrpE releases ADP from DnaK; ATP binding to DnaK triggers the release of the substrate protein, thus completing the reaction cycle. Several rounds of ATP-dependent interactions between DnaJ, DnaK and GrpE are required for fully efficient folding. Also involved, together with DnaK and GrpE, in the DNA replication of plasmids through activation of initiation proteins. This chain is Chaperone protein DnaJ, found in Gluconobacter oxydans (strain 621H) (Gluconobacter suboxydans).